Here is a 365-residue protein sequence, read N- to C-terminus: Tubulin-like protein CetZ (365 aa).

Residues 10–14 (QCGGK), 103–105 (GTG), Glu136, Asn163, and Asn181 contribute to the GTP site.

This sequence belongs to the CetZ family.

It localises to the cytoplasm. Its function is as follows. Involved in cell shape control. This Pyrococcus abyssi (strain GE5 / Orsay) protein is Tubulin-like protein CetZ.